A 458-amino-acid polypeptide reads, in one-letter code: Divalent metal cation transporter MntH (458 aa).

The next 11 membrane-spanning stretches (helical) occupy residues 38 to 58 (GFWK…VGYM), 76 to 96 (SLLS…AMAA), 119 to 139 (GGFL…AEII), 151 to 171 (MPLI…LLLM), 180 to 200 (AVVA…VILA), 223 to 243 (MLYL…LFLG), 275 to 295 (LTMA…LFFG), 315 to 335 (IVGA…LLAS), 370 to 390 (LMSV…EAKI), 393 to 413 (LLTF…IPLV), and 437 to 457 (FISG…LGFV).

It belongs to the NRAMP family.

The protein localises to the cell membrane. Functionally, h(+)-stimulated, divalent metal cation uptake system. This is Divalent metal cation transporter MntH from Lacticaseibacillus paracasei (strain ATCC 334 / BCRC 17002 / CCUG 31169 / CIP 107868 / KCTC 3260 / NRRL B-441) (Lactobacillus paracasei).